The primary structure comprises 278 residues: NAD-capped RNA hydrolase NudC (278 aa).

Position 84 (arginine 84) interacts with substrate. Zn(2+) contacts are provided by cysteine 114 and cysteine 117. Glutamate 127 lines the substrate pocket. Cysteine 132 is a binding site for Zn(2+). A substrate-binding site is contributed by tyrosine 140. The Nudix hydrolase domain maps to 141–264 (PRISPSMIVL…SIARYLIEAY (124 aa)). A divalent metal cation contacts are provided by alanine 174, glutamate 190, and glutamate 194. Residues 175–196 (GFVEPGESAEDCVHREVMEEVQ) carry the Nudix box motif. A substrate-binding site is contributed by 208 to 215 (QCWPFPHS). Position 235 (glutamate 235) interacts with a divalent metal cation. Alanine 257 contacts substrate.

This sequence belongs to the Nudix hydrolase family. NudC subfamily. Homodimer. Mg(2+) is required as a cofactor. It depends on Mn(2+) as a cofactor. Requires Zn(2+) as cofactor.

The catalysed reaction is a 5'-end NAD(+)-phospho-ribonucleoside in mRNA + H2O = a 5'-end phospho-adenosine-phospho-ribonucleoside in mRNA + beta-nicotinamide D-ribonucleotide + 2 H(+). It catalyses the reaction NAD(+) + H2O = beta-nicotinamide D-ribonucleotide + AMP + 2 H(+). It carries out the reaction NADH + H2O = reduced beta-nicotinamide D-ribonucleotide + AMP + 2 H(+). Its function is as follows. mRNA decapping enzyme that specifically removes the nicotinamide adenine dinucleotide (NAD) cap from a subset of mRNAs by hydrolyzing the diphosphate linkage to produce nicotinamide mononucleotide (NMN) and 5' monophosphate mRNA. The NAD-cap is present at the 5'-end of some mRNAs and stabilizes RNA against 5'-processing. Has preference for mRNAs with a 5'-end purine. Catalyzes the hydrolysis of a broad range of dinucleotide pyrophosphates. The protein is NAD-capped RNA hydrolase NudC of Pseudomonas syringae pv. tomato (strain ATCC BAA-871 / DC3000).